Here is a 428-residue protein sequence, read N- to C-terminus: Probable 4-methylmuconolactone transporter (428 aa).

Topologically, residues 1–26 (MFAWYKAGSPQQKKTFWACYSGWALD) are cytoplasmic. Residues 27-47 (SFDMQMFSFLLPALTLTWGLT) traverse the membrane as a helical segment. The Periplasmic portion of the chain corresponds to 48–50 (KAE). Residues 51-71 (VGVLGTVALVVTAIGGWGAGI) form a helical membrane-spanning segment. Residues 72–80 (LSDRYGRAR) are Cytoplasmic-facing. The helical transmembrane segment at 81-101 (ILVLAIIWFTLFGVLAGFAQS) threads the bilayer. Over 102–110 (YQQLLIART) the chain is Periplasmic. The helical transmembrane segment at 111–131 (LQGLGFGGEWAVGAALMAEVI) threads the bilayer. At 132–145 (DSRHRGKAIGFVQS) the chain is on the cytoplasmic side. A helical transmembrane segment spans residues 146-166 (GFALGWALAVVVATLLLAWLP). Lysine 167 is a topological domain (periplasmic). The chain crosses the membrane as a helical span at residues 168-188 (EMAWRVAFWSGIIPALIVLFI). Over 189-227 (RRHVKDSSMFERARQSRAPRASLSSVFNRKYARTLALSS) the chain is Cytoplasmic. The helical transmembrane segment at 228-248 (VLVIGLQAGCYAILVWLPSLL) threads the bilayer. The Periplasmic segment spans residues 249-252 (NQRQ). A helical membrane pass occupies residues 253–273 (VAAGSMIVTVFIMAFGSFCGF). Residues 274–287 (AVTADLSDRIGRRP) lie on the Cytoplasmic side of the membrane. The helical transmembrane segment at 288–308 (TLILLSVCAWIVTVSYMLLPL) threads the bilayer. The Periplasmic portion of the chain corresponds to 309 to 314 (NTTLTA). Residues 315–335 (ILGFLVGFSAIGMFAALGPFL) traverse the membrane as a helical segment. The Cytoplasmic portion of the chain corresponds to 336 to 356 (SELFPTNVRTTCMGFAYNVGK). A helical transmembrane segment spans residues 357–371 (SIGAGSVVGVGVLST). Over 372–377 (HIGLAN) the chain is Periplasmic. The helical transmembrane segment at 378–398 (AMGTFCLVAYAFAVFGIMLLP) threads the bilayer. Residues 399–428 (ETRGIAIENIGEADAHSPAAPLAQPASARS) are Cytoplasmic-facing.

It belongs to the major facilitator superfamily. Sugar transporter (TC 2.A.1.1) family.

The protein resides in the cell inner membrane. Its function is as follows. Probable uptake of 4-methylmuconolactone. The sequence is that of Probable 4-methylmuconolactone transporter from Cupriavidus pinatubonensis (strain JMP 134 / LMG 1197) (Cupriavidus necator (strain JMP 134)).